Consider the following 212-residue polypeptide: Proheparin-binding EGF-like growth factor (212 aa).

The signal sequence occupies residues 1–18; it reads MDGRVVLIHALLTAVCSA. Residues 19 to 167 are Extracellular-facing; that stretch reads AVGKFGRDGP…PSTYDHTTAL (149 aa). The tract at residues 82–108 is disordered; sequence SKPQGPVTPKKKGNGNKRRKGKGLGKK. Basic residues predominate over residues 90–106; it reads PKKKGNGNKRRKGKGLG. The EGF-like domain maps to 108–148; that stretch reads KRDPCLRKYKDFCIHGECKYIRELGAPSCICQPGYHGERCH. 3 cysteine pairs are disulfide-bonded: Cys-112/Cys-125, Cys-120/Cys-136, and Cys-138/Cys-147. Positions 153 to 212 are cleaved as a propeptide — C-terminal; sequence PVEHPPSTYDHTTALAVVAVVLSSLCLVIITALLMFRCHKRGVYDVENEEKIKLGITVNH. A helical transmembrane segment spans residues 168–188; the sequence is AVVAVVLSSLCLVIITALLMF. Over 189–212 the chain is Cytoplasmic; that stretch reads RCHKRGVYDVENEEKIKLGITVNH.

As to quaternary structure, interacts with CNIH2.

Its subcellular location is the secreted. The protein resides in the extracellular space. It is found in the cell membrane. May be involved in macrophage-mediated cellular proliferation. It is mitogenic for fibroblasts and smooth muscle but not endothelial cells. It is able to bind EGF receptor/EGFR with higher affinity than EGF itself and is a far more potent mitogen for smooth muscle cells than EGF. Plays an important role in the proper development of cranial nerves by inhibiting the migration of the cranial neural crest cells (NCCs) into the odd-numbered neuromeres (r3 and r5) of the hindbrain Plays a role in mediating v-Jun-induced oncogenic transformation. The protein is Proheparin-binding EGF-like growth factor (HBEGF) of Gallus gallus (Chicken).